The following is a 268-amino-acid chain: Tryptophan synthase alpha chain (268 aa).

Active-site proton acceptor residues include Glu49 and Asp60.

The protein belongs to the TrpA family. Tetramer of two alpha and two beta chains.

The enzyme catalyses (1S,2R)-1-C-(indol-3-yl)glycerol 3-phosphate + L-serine = D-glyceraldehyde 3-phosphate + L-tryptophan + H2O. It functions in the pathway amino-acid biosynthesis; L-tryptophan biosynthesis; L-tryptophan from chorismate: step 5/5. The alpha subunit is responsible for the aldol cleavage of indoleglycerol phosphate to indole and glyceraldehyde 3-phosphate. The polypeptide is Tryptophan synthase alpha chain (Xylella fastidiosa (strain M23)).